Here is a 672-residue protein sequence, read N- to C-terminus: Ubiquitin carboxyl-terminal hydrolase 19 (672 aa).

Residues 11 to 31 (NSFTQLILTLFFVSIGLLYFV) traverse the membrane as a helical segment. Zn(2+) contacts are provided by C64, C67, C75, C78, C84, C88, H97, and C101. Residues 64-101 (CSVCGKATTKKCSRCKSVRYCSAACQTSDWKSGHKLKC) form an MYND-type zinc finger. In terms of domain architecture, USP spans 174 to 480 (CGLTNCGNSC…RAYMLLYSRV (307 aa)). The Nucleophile role is filled by C183. H439 functions as the Proton acceptor in the catalytic mechanism. A disordered region spans residues 484-672 (PSNLRSEESQ…HSDTEMIDAQ (189 aa)). Positions 488–499 (RSEESQDEKKTD) are enriched in basic and acidic residues. Over residues 500-527 (TLNTESNQDGSVESSGVGTNDTSVSSLC) the composition is skewed to polar residues. 2 stretches are compositionally biased toward basic and acidic residues: residues 533-543 (HSEDPEYEKES) and 553-594 (EEGK…KEDP). Positions 606-615 (LDITTPSPSA) are enriched in polar residues. Basic and acidic residues predominate over residues 623 to 666 (ENERSDTESKPLEKEHSDTESNKPLEKEHLDSESKPLEKEHSDT).

The protein belongs to the peptidase C19 family.

It localises to the membrane. It carries out the reaction Thiol-dependent hydrolysis of ester, thioester, amide, peptide and isopeptide bonds formed by the C-terminal Gly of ubiquitin (a 76-residue protein attached to proteins as an intracellular targeting signal).. Functionally, recognizes and hydrolyzes the peptide bond at the C-terminal Gly of ubiquitin. Involved in the processing of poly-ubiquitin precursors as well as that of ubiquitinated proteins. In Arabidopsis thaliana (Mouse-ear cress), this protein is Ubiquitin carboxyl-terminal hydrolase 19 (UBP19).